We begin with the raw amino-acid sequence, 59 residues long: Large ribosomal subunit protein uL30 (59 aa).

This sequence belongs to the universal ribosomal protein uL30 family. As to quaternary structure, part of the 50S ribosomal subunit.

This Rhodococcus erythropolis (strain PR4 / NBRC 100887) protein is Large ribosomal subunit protein uL30.